The chain runs to 1227 residues: DNA-directed RNA polymerase subunit beta' (1227 aa).

The Zn(2+) site is built by Cys60, Cys62, Cys75, and Cys78. Mg(2+) is bound by residues Asp449, Asp451, and Asp453. Residues Cys847, Cys921, Cys928, and Cys931 each coordinate Zn(2+).

It belongs to the RNA polymerase beta' chain family. In terms of assembly, the RNAP catalytic core consists of 2 alpha, 1 beta, 1 beta' and 1 omega subunit. When a sigma factor is associated with the core the holoenzyme is formed, which can initiate transcription. Mg(2+) serves as cofactor. Requires Zn(2+) as cofactor.

It carries out the reaction RNA(n) + a ribonucleoside 5'-triphosphate = RNA(n+1) + diphosphate. Functionally, DNA-dependent RNA polymerase catalyzes the transcription of DNA into RNA using the four ribonucleoside triphosphates as substrates. The polypeptide is DNA-directed RNA polymerase subunit beta' (Lysinibacillus sphaericus (strain C3-41)).